The sequence spans 428 residues: 3-phosphoshikimate 1-carboxyvinyltransferase (428 aa).

3-phosphoshikimate-binding residues include Lys21, Ser22, and Arg26. Residue Lys21 coordinates phosphoenolpyruvate. Residues Gly91 and Arg119 each contribute to the phosphoenolpyruvate site. 4 residues coordinate 3-phosphoshikimate: Ser164, Gln166, Asp311, and Lys338. Gln166 lines the phosphoenolpyruvate pocket. Asp311 functions as the Proton acceptor in the catalytic mechanism. Residues Arg342 and Arg383 each coordinate phosphoenolpyruvate.

It belongs to the EPSP synthase family. Monomer.

The protein resides in the cytoplasm. The enzyme catalyses 3-phosphoshikimate + phosphoenolpyruvate = 5-O-(1-carboxyvinyl)-3-phosphoshikimate + phosphate. The protein operates within metabolic intermediate biosynthesis; chorismate biosynthesis; chorismate from D-erythrose 4-phosphate and phosphoenolpyruvate: step 6/7. Functionally, catalyzes the transfer of the enolpyruvyl moiety of phosphoenolpyruvate (PEP) to the 5-hydroxyl of shikimate-3-phosphate (S3P) to produce enolpyruvyl shikimate-3-phosphate and inorganic phosphate. This is 3-phosphoshikimate 1-carboxyvinyltransferase from Campylobacter concisus (strain 13826).